Consider the following 200-residue polypeptide: Nascent polypeptide-associated complex subunit alpha (200 aa).

Over residues 1-19 the composition is skewed to basic and acidic residues; sequence MADPRIEELPDEETKKPTV. Disordered stretches follow at residues 1–52 and 120–165; these read MADP…SRNE and QQLA…EDKD. Over residues 20-34 the composition is skewed to acidic residues; the sequence is EELDESSDEESDAEA. Positions 49 to 114 constitute an NAC-A/B domain; the sequence is SRNEKKARKA…AKIEDLNASA (66 aa). Residues 127-143 show a composition bias toward basic and acidic residues; sequence AEHDHAGHTHDHKHEAA. Residues 144–160 show a composition bias toward acidic residues; sequence KEEEEEEDDGEEVDAEG. Residues 161–200 enclose the UBA domain; that stretch reads IEDKDIELVMTQANVSRKKAIKALKENDNDIVNSIMALSV.

This sequence belongs to the NAC-alpha family. In terms of assembly, part of the nascent polypeptide-associated complex (NAC), consisting of EGD2 and EGD1. NAC associates with ribosomes via EGD1.

The protein resides in the cytoplasm. It localises to the nucleus. Functionally, component of the nascent polypeptide-associated complex (NAC), a dynamic component of the ribosomal exit tunnel, protecting the emerging polypeptides from interaction with other cytoplasmic proteins to ensure appropriate nascent protein targeting. The NAC complex also promotes mitochondrial protein import by enhancing productive ribosome interactions with the outer mitochondrial membrane and blocks the inappropriate interaction of ribosomes translating non-secretory nascent polypeptides with translocation sites in the membrane of the endoplasmic reticulum. EGD2 may also be involved in transcription regulation. This is Nascent polypeptide-associated complex subunit alpha (EGD2) from Chaetomium globosum (strain ATCC 6205 / CBS 148.51 / DSM 1962 / NBRC 6347 / NRRL 1970) (Soil fungus).